A 192-amino-acid chain; its full sequence is 7-methyl-GTP pyrophosphatase (192 aa).

The active-site Proton acceptor is the D69.

Belongs to the Maf family. YceF subfamily. The cofactor is a divalent metal cation.

Its subcellular location is the cytoplasm. It carries out the reaction N(7)-methyl-GTP + H2O = N(7)-methyl-GMP + diphosphate + H(+). Its function is as follows. Nucleoside triphosphate pyrophosphatase that hydrolyzes 7-methyl-GTP (m(7)GTP). May have a dual role in cell division arrest and in preventing the incorporation of modified nucleotides into cellular nucleic acids. This Pseudomonas syringae pv. tomato (strain ATCC BAA-871 / DC3000) protein is 7-methyl-GTP pyrophosphatase (maf-1).